Consider the following 154-residue polypeptide: Troponin C, isoform 1 (154 aa).

EF-hand domains lie at 8-43 (EQTA…LGHQ), 44-79 (LDDA…FLVE), 84-119 (AMMA…LDDK), and 120-154 (LTND…GGDD). The Ca(2+) site is built by D57, D59, S61, Q63, and E68. The Ca(2+) site is built by D133, D135, S137, T139, and E144.

The protein belongs to the troponin C family. In terms of tissue distribution, present only in adult muscles.

The chain is Troponin C, isoform 1 (TpnC41C) from Drosophila melanogaster (Fruit fly).